A 284-amino-acid polypeptide reads, in one-letter code: Bifunctional protein FolD (284 aa).

Residues 166–168 and Ile-232 contribute to the NADP(+) site; that span reads GAS.

The protein belongs to the tetrahydrofolate dehydrogenase/cyclohydrolase family. Homodimer.

The catalysed reaction is (6R)-5,10-methylene-5,6,7,8-tetrahydrofolate + NADP(+) = (6R)-5,10-methenyltetrahydrofolate + NADPH. The enzyme catalyses (6R)-5,10-methenyltetrahydrofolate + H2O = (6R)-10-formyltetrahydrofolate + H(+). The protein operates within one-carbon metabolism; tetrahydrofolate interconversion. Catalyzes the oxidation of 5,10-methylenetetrahydrofolate to 5,10-methenyltetrahydrofolate and then the hydrolysis of 5,10-methenyltetrahydrofolate to 10-formyltetrahydrofolate. This is Bifunctional protein FolD from Pseudomonas entomophila (strain L48).